An 89-amino-acid chain; its full sequence is Small ribosomal subunit protein uS15 (89 aa).

Over residues Met1–Ser13 the composition is skewed to basic and acidic residues. The disordered stretch occupies residues Met1–Ser24.

It belongs to the universal ribosomal protein uS15 family. Part of the 30S ribosomal subunit. Forms a bridge to the 50S subunit in the 70S ribosome, contacting the 23S rRNA.

Functionally, one of the primary rRNA binding proteins, it binds directly to 16S rRNA where it helps nucleate assembly of the platform of the 30S subunit by binding and bridging several RNA helices of the 16S rRNA. In terms of biological role, forms an intersubunit bridge (bridge B4) with the 23S rRNA of the 50S subunit in the ribosome. This Christiangramia forsetii (strain DSM 17595 / CGMCC 1.15422 / KT0803) (Gramella forsetii) protein is Small ribosomal subunit protein uS15.